The primary structure comprises 215 residues: Pyrrolidone-carboxylate peptidase (215 aa).

Catalysis depends on residues Glu-80, Cys-143, and His-167.

The protein belongs to the peptidase C15 family. As to quaternary structure, homotetramer.

It localises to the cytoplasm. It catalyses the reaction Release of an N-terminal pyroglutamyl group from a polypeptide, the second amino acid generally not being Pro.. Its function is as follows. Removes 5-oxoproline from various penultimate amino acid residues except L-proline. In Bacillus thuringiensis (strain Al Hakam), this protein is Pyrrolidone-carboxylate peptidase.